The primary structure comprises 364 residues: Mannose-1-phosphate guanyltransferase (364 aa).

Belongs to the transferase hexapeptide repeat family.

The protein resides in the cytoplasm. It catalyses the reaction alpha-D-mannose 1-phosphate + GTP + H(+) = GDP-alpha-D-mannose + diphosphate. Its pathway is nucleotide-sugar biosynthesis; GDP-alpha-D-mannose biosynthesis; GDP-alpha-D-mannose from alpha-D-mannose 1-phosphate (GTP route): step 1/1. Functionally, involved in cell wall synthesis where it is required for glycosylation. Involved in cell cycle progression through cell-size checkpoint. The protein is Mannose-1-phosphate guanyltransferase (mpg1) of Aspergillus fumigatus (strain ATCC MYA-4609 / CBS 101355 / FGSC A1100 / Af293) (Neosartorya fumigata).